Reading from the N-terminus, the 65-residue chain is Large ribosomal subunit protein bL32 (65 aa).

Basic residues predominate over residues 1–19 (MAIVPKRKTSKQRKHKRQS). A disordered region spans residues 1 to 21 (MAIVPKRKTSKQRKHKRQSHS).

Belongs to the bacterial ribosomal protein bL32 family.

In Mesomycoplasma hyopneumoniae (strain 7448) (Mycoplasma hyopneumoniae), this protein is Large ribosomal subunit protein bL32.